Consider the following 956-residue polypeptide: Zinc fingers and homeoboxes protein 3 (956 aa).

Positions 1–107 (MASKRKSTTP…SEHTDFNKDP (107 aa)) are required for nuclear localization. Residues 22-66 (DASMEAQPAETLPEGPQQDLPPEASAASSEAAQNPSSTDGSTLAN) are disordered. The segment covering 42–58 (PPEASAASSEAAQNPSS) has biased composition (low complexity). 2 C2H2-type zinc fingers span residues 77-100 (YSCKYCDFRSHDMTQFVGHMNSEH) and 109-132 (FVCSGCSFLAKTPEGLSLHNATCH). The interval 242-488 (ASASSAKNPH…LLTACPSITS (247 aa)) is required for homodimerization and interaction with NFYA. Positions 303 to 502 (LSSIPTYNAA…DASIYKNKKS (200 aa)) are required for repressor activity. DNA-binding regions (homeobox) lie at residues 304–363 (SSIP…GISW) and 494–553 (ASIY…RNLK). The segment at 497 to 555 (YKNKKSHEQLSALKGSFCRNQFPGQSEVEHLTKVTGLSTREVRKWFSDRRYHCRNLKGS) is required for nuclear localization. Disordered regions lie at residues 598 to 618 (PSAKRQSWHQTPDFTPTKYKE) and 666 to 695 (KVNAEETKKAEENASQEEEEAAEDEGGEED). Phosphoserine occurs at positions 599 and 604. A DNA-binding region (homeobox 3) is located at residues 612–671 (TPTKYKERAPEQLRALESSFAQNPLPLDEELDRLRSETKMTRREIDSWFSERRKKVNAEE). Basic and acidic residues predominate over residues 666 to 677 (KVNAEETKKAEE). Over residues 679-695 (ASQEEEEAAEDEGGEED) the composition is skewed to acidic residues. A phosphoserine mark is found at S680, S708, and S723. 2 consecutive DNA-binding regions (homeobox) follow at residues 764–823 (PGKV…KNGQ) and 835–894 (FPPG…TRAV). The tract at residues 890 to 956 (ETRAVADTGS…PQAGRQLETD (67 aa)) is disordered. Phosphoserine occurs at positions 927 and 946.

The protein belongs to the ZHX family. In terms of assembly, homodimer (via homeobox domain 1). Heterodimer with ZHX1 (via homeobox domain 1). Heterodimer with ZHX2 (via homeobox domain 1). Heterodimerization with ZHX1 is a prerequisite for repressor activity. Interacts with NFYA. As to expression, widely expressed. High expression in kidney. Expressed during osteogenic differentiation.

The protein localises to the nucleus. In terms of biological role, acts as a transcriptional repressor. Involved in the early stages of mesenchymal stem cell (MSC) osteogenic differentiation. Is a regulator of podocyte gene expression during primary glomerula disease. Binds to promoter DNA. In Homo sapiens (Human), this protein is Zinc fingers and homeoboxes protein 3 (ZHX3).